Here is a 587-residue protein sequence, read N- to C-terminus: Formate--tetrahydrofolate ligase (587 aa).

An ATP-binding site is contributed by 73–80; it reads TPLGEGKS.

The protein belongs to the formate--tetrahydrofolate ligase family.

It carries out the reaction (6S)-5,6,7,8-tetrahydrofolate + formate + ATP = (6R)-10-formyltetrahydrofolate + ADP + phosphate. Its pathway is one-carbon metabolism; tetrahydrofolate interconversion. This chain is Formate--tetrahydrofolate ligase, found in Desulfosudis oleivorans (strain DSM 6200 / JCM 39069 / Hxd3) (Desulfococcus oleovorans).